Here is a 701-residue protein sequence, read N- to C-terminus: DNA ligase (701 aa).

The interval Met1–Glu21 is disordered. Residues Asp50–Asp54, Ser100–Leu101, and Glu130 each bind NAD(+). Residue Lys132 is the N6-AMP-lysine intermediate of the active site. Positions 153, 193, 309, and 333 each coordinate NAD(+). Zn(2+) is bound by residues Cys427, Cys430, Cys446, and Cys452. The 86-residue stretch at Ser616–Gly701 folds into the BRCT domain.

It belongs to the NAD-dependent DNA ligase family. LigA subfamily. Mg(2+) serves as cofactor. It depends on Mn(2+) as a cofactor.

It catalyses the reaction NAD(+) + (deoxyribonucleotide)n-3'-hydroxyl + 5'-phospho-(deoxyribonucleotide)m = (deoxyribonucleotide)n+m + AMP + beta-nicotinamide D-nucleotide.. In terms of biological role, DNA ligase that catalyzes the formation of phosphodiester linkages between 5'-phosphoryl and 3'-hydroxyl groups in double-stranded DNA using NAD as a coenzyme and as the energy source for the reaction. It is essential for DNA replication and repair of damaged DNA. The chain is DNA ligase from Mycobacterium sp. (strain KMS).